The primary structure comprises 555 residues: Protein NRT1/ PTR FAMILY 2.1 (555 aa).

The next 12 helical transmembrane spans lie at 32-52, 68-88, 91-111, 127-147, 175-195, 205-225, 324-344, 369-389, 401-421, 437-457, 476-496, and 517-537; these read TLLGISVTSYGWVLNLIVFLI, IVNGCLSMLPVVTAILADSFF, IPVISASAFISLLGIFLLTLI, ILCQSPSKLHLGVLYAALALV, FFNWYFLTVNTGAIISATAIV, LGFGLCAAANLISFIVFISGK, VLPLWLAILFVGTSIGVQASM, VIVLISSCVFLVLNNWTIYPI, LQQVGIGQVFNILSMAISAIV, VLWLLPPLVIVGIGDAFHYMA, SVTSVAFGISFYLSTALINLI, and WVLVIGGVLNLGYFFVCSWYF.

This sequence belongs to the major facilitator superfamily. Proton-dependent oligopeptide transporter (POT/PTR) (TC 2.A.17) family. In terms of tissue distribution, expressed in roots.

The protein localises to the membrane. Functionally, transporter involved in a passive nitrate efflux. In Arabidopsis thaliana (Mouse-ear cress), this protein is Protein NRT1/ PTR FAMILY 2.1 (NPF2.1).